Reading from the N-terminus, the 23-residue chain is Benzaldehyde dehydrogenase [NAD(+)] I (23 aa).

It belongs to the aldehyde dehydrogenase family. Homotetramer.

The catalysed reaction is benzaldehyde + NAD(+) + H2O = benzoate + NADH + 2 H(+). The sequence is that of Benzaldehyde dehydrogenase [NAD(+)] I from Acinetobacter guillouiae (Acinetobacter genomosp. 11).